The primary structure comprises 221 residues: Endonuclease V (221 aa).

Mg(2+)-binding residues include Asp-44 and Asp-112.

Belongs to the endonuclease V family. Mg(2+) serves as cofactor.

It localises to the cytoplasm. The enzyme catalyses Endonucleolytic cleavage at apurinic or apyrimidinic sites to products with a 5'-phosphate.. Functionally, DNA repair enzyme involved in the repair of deaminated bases. Selectively cleaves double-stranded DNA at the second phosphodiester bond 3' to a deoxyinosine leaving behind the intact lesion on the nicked DNA. The protein is Endonuclease V of Trichormus variabilis (strain ATCC 29413 / PCC 7937) (Anabaena variabilis).